Consider the following 97-residue polypeptide: Large ribosomal subunit protein uL23 (97 aa).

Belongs to the universal ribosomal protein uL23 family. In terms of assembly, part of the 50S ribosomal subunit. Contacts protein L29, and trigger factor when it is bound to the ribosome.

One of the early assembly proteins it binds 23S rRNA. One of the proteins that surrounds the polypeptide exit tunnel on the outside of the ribosome. Forms the main docking site for trigger factor binding to the ribosome. The chain is Large ribosomal subunit protein uL23 from Methylococcus capsulatus (strain ATCC 33009 / NCIMB 11132 / Bath).